The primary structure comprises 1096 residues: Lysine-specific demethylase 4B (1096 aa).

The JmjN domain maps to 15–57 (IMTFRPTMEEFKDFNKYVAYIESQGAHRAGLAKIIPPKEWKPR). Residue Tyr-133 coordinates 2-oxoglutarate. Residues 146–309 (VAQWNIGSLR…YGKVATQCTC (164 aa)) form the JmjC domain. 2 residues coordinate Fe cation: His-189 and Glu-191. The 2-oxoglutarate site is built by Asn-199 and Lys-207. 2 residues coordinate Zn(2+): Cys-235 and His-241. A 2-oxoglutarate-binding site is contributed by Lys-242. His-277 provides a ligand contact to Fe cation. Zn(2+)-binding residues include Cys-307 and Cys-309. The segment covering 369–382 (LLRRSHRKRSQPKK) has biased composition (basic residues). Disordered stretches follow at residues 369–478 (LLRR…SEEA) and 557–649 (KGPT…VSDP). Residues 391 to 406 (PGEGTAGAALLEEAGG) are compositionally biased toward low complexity. Residues 413–425 (GPEVDPEEEEEEP) are compositionally biased toward acidic residues. Residues 430-443 (HGREAEGAEEDGRG) are compositionally biased toward basic and acidic residues. Residues 444–458 (KLRPTKAKSERKKKS) are compositionally biased toward basic residues. Ser-566 carries the post-translational modification Phosphoserine. Lys-602 bears the N6-acetyllysine mark. The segment covering 632–648 (SSDEEASPFSGEEDVSD) has biased composition (acidic residues). The PHD-type 1 zinc finger occupies 731–789 (MCFTSGGENTEPLPANSYIGDDGTSPLIACGKCCLQVHASCYGIRPELVNEGWTCSRCA). A C2HC pre-PHD-type zinc finger spans residues 794–827 (TAECCLCNLRGGALQMTTDRRWIHVICAIAVPEA). The PHD-type 2 zinc-finger motif lies at 850–907 (LKCVYCRKRMKKVSGACIQCSYEHCSTSFHVTCAHAAGVLMEPDDWPYVVSITCLKHK). Tudor domains lie at 917-974 (RAVS…CVQL) and 975-1031 (GPPS…EELP). The segment at 1037 to 1073 (RLSLSTGAPQEPAFSGEEAKAAKRPRVGTPLATEDSG) is disordered. Position 1065 is a phosphothreonine (Thr-1065).

The protein belongs to the JHDM3 histone demethylase family. Fe(2+) serves as cofactor.

It is found in the nucleus. The catalysed reaction is N(6),N(6),N(6)-trimethyl-L-lysyl(9)-[histone H3] + 2 2-oxoglutarate + 2 O2 = N(6)-methyl-L-lysyl(9)-[histone H3] + 2 formaldehyde + 2 succinate + 2 CO2. Functionally, histone demethylase that specifically demethylates 'Lys-9' of histone H3, thereby playing a role in histone code. Does not demethylate histone H3 'Lys-4', H3 'Lys-27', H3 'Lys-36' nor H4 'Lys-20'. Only able to demethylate trimethylated H3 'Lys-9', with a weaker activity than KDM4A, KDM4C and KDM4D. Demethylation of Lys residue generates formaldehyde and succinate. Plays a critical role in the development of the central nervous system (CNS). The sequence is that of Lysine-specific demethylase 4B (KDM4B) from Homo sapiens (Human).